The chain runs to 105 residues: Probable molt-inhibiting hormone (105 aa).

Positions 1 to 28 (MYRMPMRFWLTAVVMVVVGALLLDTASA) are cleaved as a signal peptide. Disulfide bonds link Cys35–Cys72, Cys52–Cys68, and Cys55–Cys81.

This sequence belongs to the arthropod CHH/MIH/GIH/VIH hormone family. In terms of tissue distribution, expressed in the postmolt, intermolt, and premolt stages of the shrimp eyestalks and the brain.

The protein resides in the secreted. Functionally, inhibits Y-organs where molting hormone (ecdysteroid) is secreted. A molting cycle is initiated when MIH secretion diminishes or stops. The protein is Probable molt-inhibiting hormone of Metapenaeus ensis (Greasyback shrimp).